The chain runs to 983 residues: Anion exchange protein 4 (983 aa).

The interval methionine 1–leucine 48 is disordered. An N-linked (GlcNAc...) asparagine glycan is attached at asparagine 183. Disordered stretches follow at residues threonine 186–glutamate 205 and arginine 332–alanine 357. Transmembrane regions (helical) follow at residues alanine 415–glycine 435, glycine 443–glycine 463, valine 500–valine 520, and glycine 530–leucine 550. Residues alanine 415–asparagine 983 form a membrane (anion exchange) region. 2 N-linked (GlcNAc...) asparagine glycosylation sites follow: asparagine 576 and asparagine 600. The next 7 membrane-spanning stretches (helical) occupy residues valine 624–alanine 644, phenylalanine 665–threonine 685, proline 712–methionine 732, leucine 758–serine 778, glycine 815–isoleucine 835, methionine 837–phenylalanine 857, and leucine 899–valine 919. Over residues arginine 946–histidine 957 the composition is skewed to basic and acidic residues. The tract at residues arginine 946–asparagine 983 is disordered. A glycan (N-linked (GlcNAc...) asparagine) is linked at asparagine 979.

Belongs to the anion exchanger (TC 2.A.31) family. As to expression, kidney specific.

The protein localises to the basolateral cell membrane. The catalysed reaction is 2 hydrogencarbonate(out) + chloride(in) + Na(+)(out) = 2 hydrogencarbonate(in) + chloride(out) + Na(+)(in). The enzyme catalyses K(+)(in) + 2 hydrogencarbonate(in) + chloride(out) = K(+)(out) + 2 hydrogencarbonate(out) + chloride(in). It catalyses the reaction Li(+)(in) + 2 hydrogencarbonate(in) + chloride(out) = Li(+)(out) + 2 hydrogencarbonate(out) + chloride(in). It carries out the reaction Rb(+)(in) + 2 hydrogencarbonate(in) + chloride(out) = Rb(+)(out) + 2 hydrogencarbonate(out) + chloride(in). The catalysed reaction is Cs(+)(in) + 2 hydrogencarbonate(in) + chloride(out) = Cs(+)(out) + 2 hydrogencarbonate(out) + chloride(in). Functionally, electroneutral Cl(-)/HCO3(-) antiporter that favors chloride ion entry and efflux of hydrogencarbonate and sodium ion across the basolateral membrane and may participate in salivary secretion. Also mediates Cl(-)/HCO3(-) exchange activity in the presence of K(+) as well as Cs(+), Li(+), and Rb(+). Does not contribute to Cl(-)/HCO3(-) exchanger in the apical membrane of the upper villous epithelium. The chain is Anion exchange protein 4 from Homo sapiens (Human).